The sequence spans 145 residues: DnaJ homolog subfamily B member 3 (145 aa).

The 69-residue stretch at 1-69 (MVDYYEVLDV…KKRDIYDRYG (69 aa)) folds into the J domain.

As to expression, expressed in sperm (at protein level).

In terms of biological role, may operate as a co-chaperone of the male germ cell- and haploid stage-specific Hsp70 proteins. The sequence is that of DnaJ homolog subfamily B member 3 (DNAJB3) from Homo sapiens (Human).